Consider the following 398-residue polypeptide: Ribosomal RNA small subunit methyltransferase B (398 aa).

S-adenosyl-L-methionine is bound by residues 221 to 227 (CGGAGLK), Asp242, Asp268, and Asp283. Catalysis depends on Cys336, which acts as the Nucleophile.

This sequence belongs to the class I-like SAM-binding methyltransferase superfamily. RsmB/NOP family.

The protein localises to the cytoplasm. The catalysed reaction is cytidine(967) in 16S rRNA + S-adenosyl-L-methionine = 5-methylcytidine(967) in 16S rRNA + S-adenosyl-L-homocysteine + H(+). Functionally, specifically methylates the cytosine at position 967 (m5C967) of 16S rRNA. The sequence is that of Ribosomal RNA small subunit methyltransferase B from Thermus thermophilus (strain ATCC 27634 / DSM 579 / HB8).